A 308-amino-acid polypeptide reads, in one-letter code: Phosphoribosylaminoimidazole-succinocarboxamide synthase (308 aa).

The protein belongs to the SAICAR synthetase family.

The catalysed reaction is 5-amino-1-(5-phospho-D-ribosyl)imidazole-4-carboxylate + L-aspartate + ATP = (2S)-2-[5-amino-1-(5-phospho-beta-D-ribosyl)imidazole-4-carboxamido]succinate + ADP + phosphate + 2 H(+). The protein operates within purine metabolism; IMP biosynthesis via de novo pathway; 5-amino-1-(5-phospho-D-ribosyl)imidazole-4-carboxamide from 5-amino-1-(5-phospho-D-ribosyl)imidazole-4-carboxylate: step 1/2. This is Phosphoribosylaminoimidazole-succinocarboxamide synthase from Xylella fastidiosa (strain Temecula1 / ATCC 700964).